The chain runs to 311 residues: Porphobilinogen deaminase (311 aa).

S-(dipyrrolylmethanemethyl)cysteine is present on cysteine 242.

It belongs to the HMBS family. In terms of assembly, monomer. Dipyrromethane serves as cofactor.

It catalyses the reaction 4 porphobilinogen + H2O = hydroxymethylbilane + 4 NH4(+). The protein operates within porphyrin-containing compound metabolism; protoporphyrin-IX biosynthesis; coproporphyrinogen-III from 5-aminolevulinate: step 2/4. Its function is as follows. Tetrapolymerization of the monopyrrole PBG into the hydroxymethylbilane pre-uroporphyrinogen in several discrete steps. This Hahella chejuensis (strain KCTC 2396) protein is Porphobilinogen deaminase.